A 134-amino-acid chain; its full sequence is Small ribosomal subunit protein uS8 (134 aa).

This sequence belongs to the universal ribosomal protein uS8 family. Part of the 30S ribosomal subunit. Contacts proteins S5 and S12.

Functionally, one of the primary rRNA binding proteins, it binds directly to 16S rRNA central domain where it helps coordinate assembly of the platform of the 30S subunit. This Petrotoga mobilis (strain DSM 10674 / SJ95) protein is Small ribosomal subunit protein uS8.